The following is a 505-amino-acid chain: Protein disulfide-isomerase (505 aa).

An N-terminal signal peptide occupies residues 1-20 (MHKAQKFALGLLAAAAVATA). Thioredoxin domains lie at 21–128 (SDVV…QSLP) and 335–465 (FVAG…ENGK). Catalysis depends on nucleophile residues Cys-50, Cys-53, Cys-385, and Cys-388. Intrachain disulfides connect Cys-50/Cys-53 and Cys-385/Cys-388. A disordered region spans residues 470-505 (ISEDAEETSSATETTTETATKSEEAAKETATEHDEL). Positions 477–488 (TSSATETTTETA) are enriched in low complexity. Positions 489 to 505 (TKSEEAAKETATEHDEL) are enriched in basic and acidic residues. Residues 502-505 (HDEL) carry the Prevents secretion from ER motif.

It belongs to the protein disulfide isomerase family.

Its subcellular location is the endoplasmic reticulum lumen. It catalyses the reaction Catalyzes the rearrangement of -S-S- bonds in proteins.. Participates in the folding of proteins containing disulfide bonds, may be involved in glycosylation, prolyl hydroxylation and triglyceride transfer. This Humicola insolens (Soft-rot fungus) protein is Protein disulfide-isomerase.